Consider the following 557-residue polypeptide: Dihydroxy-acid dehydratase (557 aa).

A Mg(2+)-binding site is contributed by aspartate 78. Cysteine 119 contacts [2Fe-2S] cluster. Residues aspartate 120 and lysine 121 each coordinate Mg(2+). Lysine 121 is modified (N6-carboxylysine). Cysteine 191 serves as a coordination point for [2Fe-2S] cluster. Glutamate 442 provides a ligand contact to Mg(2+). Residue serine 468 is the Proton acceptor of the active site.

This sequence belongs to the IlvD/Edd family. Homodimer. [2Fe-2S] cluster is required as a cofactor. The cofactor is Mg(2+).

It catalyses the reaction (2R)-2,3-dihydroxy-3-methylbutanoate = 3-methyl-2-oxobutanoate + H2O. The catalysed reaction is (2R,3R)-2,3-dihydroxy-3-methylpentanoate = (S)-3-methyl-2-oxopentanoate + H2O. The protein operates within amino-acid biosynthesis; L-isoleucine biosynthesis; L-isoleucine from 2-oxobutanoate: step 3/4. It functions in the pathway amino-acid biosynthesis; L-valine biosynthesis; L-valine from pyruvate: step 3/4. Its function is as follows. Functions in the biosynthesis of branched-chain amino acids. Catalyzes the dehydration of (2R,3R)-2,3-dihydroxy-3-methylpentanoate (2,3-dihydroxy-3-methylvalerate) into 2-oxo-3-methylpentanoate (2-oxo-3-methylvalerate) and of (2R)-2,3-dihydroxy-3-methylbutanoate (2,3-dihydroxyisovalerate) into 2-oxo-3-methylbutanoate (2-oxoisovalerate), the penultimate precursor to L-isoleucine and L-valine, respectively. The sequence is that of Dihydroxy-acid dehydratase from Lachnoclostridium phytofermentans (strain ATCC 700394 / DSM 18823 / ISDg) (Clostridium phytofermentans).